A 358-amino-acid chain; its full sequence is Nicotinate-nucleotide--dimethylbenzimidazole phosphoribosyltransferase (358 aa).

Catalysis depends on glutamate 314, which acts as the Proton acceptor.

It belongs to the CobT family.

The catalysed reaction is 5,6-dimethylbenzimidazole + nicotinate beta-D-ribonucleotide = alpha-ribazole 5'-phosphate + nicotinate + H(+). Its pathway is nucleoside biosynthesis; alpha-ribazole biosynthesis; alpha-ribazole from 5,6-dimethylbenzimidazole: step 1/2. Functionally, catalyzes the synthesis of alpha-ribazole-5'-phosphate from nicotinate mononucleotide (NAMN) and 5,6-dimethylbenzimidazole (DMB). This Mycobacterium ulcerans (strain Agy99) protein is Nicotinate-nucleotide--dimethylbenzimidazole phosphoribosyltransferase.